The following is a 278-amino-acid chain: NAD-capped RNA hydrolase NudC (278 aa).

A substrate-binding site is contributed by Arg84. Residues Cys114 and Cys117 each coordinate Zn(2+). Glu127 provides a ligand contact to substrate. Zn(2+)-binding residues include Cys132 and Cys135. Tyr140 is a substrate binding site. The 125-residue stretch at 141–265 (PRLSPSMIVL…IARHLIDLYL (125 aa)) folds into the Nudix hydrolase domain. Residues Ala174, Glu190, and Glu194 each contribute to the a divalent metal cation site. The Nudix box motif lies at 175–196 (GFVEAGESVEQCVVREVREEVG). 208–215 (QNWPFPHS) contacts substrate. Position 235 (Glu235) interacts with a divalent metal cation. Ala257 is a substrate binding site.

Belongs to the Nudix hydrolase family. NudC subfamily. Homodimer. Mg(2+) is required as a cofactor. Requires Mn(2+) as cofactor. It depends on Zn(2+) as a cofactor.

It carries out the reaction a 5'-end NAD(+)-phospho-ribonucleoside in mRNA + H2O = a 5'-end phospho-adenosine-phospho-ribonucleoside in mRNA + beta-nicotinamide D-ribonucleotide + 2 H(+). It catalyses the reaction NAD(+) + H2O = beta-nicotinamide D-ribonucleotide + AMP + 2 H(+). The catalysed reaction is NADH + H2O = reduced beta-nicotinamide D-ribonucleotide + AMP + 2 H(+). Functionally, mRNA decapping enzyme that specifically removes the nicotinamide adenine dinucleotide (NAD) cap from a subset of mRNAs by hydrolyzing the diphosphate linkage to produce nicotinamide mononucleotide (NMN) and 5' monophosphate mRNA. The NAD-cap is present at the 5'-end of some mRNAs and stabilizes RNA against 5'-processing. Has preference for mRNAs with a 5'-end purine. Catalyzes the hydrolysis of a broad range of dinucleotide pyrophosphates. The polypeptide is NAD-capped RNA hydrolase NudC (Pseudomonas aeruginosa (strain ATCC 15692 / DSM 22644 / CIP 104116 / JCM 14847 / LMG 12228 / 1C / PRS 101 / PAO1)).